We begin with the raw amino-acid sequence, 842 residues long: Outer membrane usher protein AggC (842 aa).

The N-terminal stretch at Met-1–Ala-21 is a signal peptide. A disulfide bond links Cys-819 and Cys-841.

The protein belongs to the fimbrial export usher family.

Its subcellular location is the cell outer membrane. Its function is as follows. Involved in the export and assembly of the AAF/I fimbriae subunits across the outer membrane. This chain is Outer membrane usher protein AggC (aggC), found in Escherichia coli.